The primary structure comprises 237 residues: Phosphoribosylaminoimidazole-succinocarboxamide synthase (237 aa).

This sequence belongs to the SAICAR synthetase family.

The enzyme catalyses 5-amino-1-(5-phospho-D-ribosyl)imidazole-4-carboxylate + L-aspartate + ATP = (2S)-2-[5-amino-1-(5-phospho-beta-D-ribosyl)imidazole-4-carboxamido]succinate + ADP + phosphate + 2 H(+). The protein operates within purine metabolism; IMP biosynthesis via de novo pathway; 5-amino-1-(5-phospho-D-ribosyl)imidazole-4-carboxamide from 5-amino-1-(5-phospho-D-ribosyl)imidazole-4-carboxylate: step 1/2. The protein is Phosphoribosylaminoimidazole-succinocarboxamide synthase of Pseudomonas fluorescens (strain SBW25).